We begin with the raw amino-acid sequence, 149 residues long: D-aminoacyl-tRNA deacylase (149 aa).

The Gly-cisPro motif, important for rejection of L-amino acids motif lies at 137–138 (GP).

Belongs to the DTD family. In terms of assembly, homodimer.

It is found in the cytoplasm. The enzyme catalyses glycyl-tRNA(Ala) + H2O = tRNA(Ala) + glycine + H(+). The catalysed reaction is a D-aminoacyl-tRNA + H2O = a tRNA + a D-alpha-amino acid + H(+). Functionally, an aminoacyl-tRNA editing enzyme that deacylates mischarged D-aminoacyl-tRNAs. Also deacylates mischarged glycyl-tRNA(Ala), protecting cells against glycine mischarging by AlaRS. Acts via tRNA-based rather than protein-based catalysis; rejects L-amino acids rather than detecting D-amino acids in the active site. By recycling D-aminoacyl-tRNA to D-amino acids and free tRNA molecules, this enzyme counteracts the toxicity associated with the formation of D-aminoacyl-tRNA entities in vivo and helps enforce protein L-homochirality. This chain is D-aminoacyl-tRNA deacylase, found in Desulfitobacterium hafniense (strain DSM 10664 / DCB-2).